Consider the following 435-residue polypeptide: E3 ubiquitin-protein ligase PUB22 (435 aa).

Positions 6–81 constitute a U-box domain; it reads EIPSFFLCPI…QSWCTLNASY (76 aa).

In terms of assembly, interacts with RPN12A. Binds to EXO70B2. In terms of processing, auto-ubiquitinated leading to degradation via the 26S proteasome. This Auto-ubiquitination is repressed by the bacterial elicitor flg22 thus leading to a transiently increased protein stabilization and accumulation.

It is found in the cytoplasm. It catalyses the reaction S-ubiquitinyl-[E2 ubiquitin-conjugating enzyme]-L-cysteine + [acceptor protein]-L-lysine = [E2 ubiquitin-conjugating enzyme]-L-cysteine + N(6)-ubiquitinyl-[acceptor protein]-L-lysine.. Its pathway is protein modification; protein ubiquitination. In terms of biological role, E3 ubiquitin-protein ligase that negatively regulates water stress response. May control in coordination with PUB23 a drought signaling pathway by ubiquitinating cytosolic RPN12a. Acts as a negative regulator of the immunity triggered by the pathogen-associated molecular patterns (PAMPs), in association with PUB23 and PUB24. Regulates EXO70B2 ubiquitination and degradation via the 26S proteasome to attenuate PAMP-induced signaling. In Arabidopsis thaliana (Mouse-ear cress), this protein is E3 ubiquitin-protein ligase PUB22.